We begin with the raw amino-acid sequence, 635 residues long: Dual specificity protein kinase zak2 (635 aa).

2 consecutive Protein kinase domains span residues 9 to 249 (WEEI…HRLI) and 299 to 585 (NKDD…QIYF). Residues 15-23 (IGSCNSKSR) and lysine 45 contribute to the ATP site. The active-site Proton acceptor is aspartate 124. ATP-binding positions include 305–313 (GGDGFFSVV) and lysine 326. The active-site Proton acceptor is the aspartate 427.

It in the N-terminal section; belongs to the protein kinase superfamily. Ser/Thr protein kinase family. In the C-terminal section; belongs to the protein kinase superfamily. TKL Tyr protein kinase family. In terms of processing, C-terminal tyrosine kinase domain is capable of autophosphorylation, in vitro. In terms of tissue distribution, zakA and zak2 are coexpressed in prestalk cell population, zakA is enriched in pstB populations and zak1 in pstA populations. ZakA and zak2 are coexpressed in prespore cells, zakA expression levels are 10 fold higher than zak2.

It catalyses the reaction L-seryl-[protein] + ATP = O-phospho-L-seryl-[protein] + ADP + H(+). It carries out the reaction L-threonyl-[protein] + ATP = O-phospho-L-threonyl-[protein] + ADP + H(+). The catalysed reaction is L-tyrosyl-[protein] + ATP = O-phospho-L-tyrosyl-[protein] + ADP + H(+). Positive regulator of gsk3/gskA activity required for cell pattern formation and a downstream effector of carC. The kinases, gsk3/gskA, zakA and zak2, form part of a signaling pathway that responds to extracellular cyclic AMP. The pathway has a role in transcriptional regulation; required to direct prespore/spore fates during development. Zak2 negatively regulates prestalk differentiation by regulating expression of ecmA. Phosphorylates Y-214 of gsk3/gskA, in vitro. In Dictyostelium discoideum (Social amoeba), this protein is Dual specificity protein kinase zak2 (zak2).